The sequence spans 425 residues: tRNA(Ile)-lysidine synthase (425 aa).

27-32 serves as a coordination point for ATP; it reads SGGLDS.

The protein belongs to the tRNA(Ile)-lysidine synthase family.

It localises to the cytoplasm. It catalyses the reaction cytidine(34) in tRNA(Ile2) + L-lysine + ATP = lysidine(34) in tRNA(Ile2) + AMP + diphosphate + H(+). In terms of biological role, ligates lysine onto the cytidine present at position 34 of the AUA codon-specific tRNA(Ile) that contains the anticodon CAU, in an ATP-dependent manner. Cytidine is converted to lysidine, thus changing the amino acid specificity of the tRNA from methionine to isoleucine. This chain is tRNA(Ile)-lysidine synthase, found in Streptococcus sanguinis (strain SK36).